A 247-amino-acid polypeptide reads, in one-letter code: Reticulon-like protein B8 (247 aa).

One can recognise a Reticulon domain in the interval serine 61–glutamate 247. Helical transmembrane passes span lysine 71–asparagine 91, phenylalanine 92–tryptophan 112, and phenylalanine 166–leucine 186.

Its subcellular location is the endoplasmic reticulum membrane. This Arabidopsis thaliana (Mouse-ear cress) protein is Reticulon-like protein B8 (RTNLB8).